Consider the following 172-residue polypeptide: Disulfide bond formation protein B (172 aa).

The Cytoplasmic segment spans residues 1 to 11 (MNPFRWSFRAQ). A helical membrane pass occupies residues 12-28 (FLLGFLACAGLLAYAIY). The Periplasmic portion of the chain corresponds to 29–46 (VQLHLGLEPCPLCIFQRI). Cysteines 38 and 41 form a disulfide. Residues 47 to 63 (AFAALAVFFLIGALHGP) traverse the membrane as a helical segment. Topologically, residues 64 to 70 (RAAGARK) are cytoplasmic. Residues 71 to 88 (VYGVLSFIAAGVGMGIGA) traverse the membrane as a helical segment. The Periplasmic portion of the chain corresponds to 89 to 145 (RHVWVQIRPKDMMSSCGPPLSFLSETMGPFEVFRTVLTGTGDCGNIDWRFLGLSMPM). C104 and C131 are disulfide-bonded. The helical transmembrane segment at 146–164 (WSMVWFVGLALWALSAGFK) threads the bilayer. At 165-172 (ARRSSLHH) the chain is on the cytoplasmic side.

Belongs to the DsbB family.

The protein localises to the cell inner membrane. Functionally, required for disulfide bond formation in some periplasmic proteins. Acts by oxidizing the DsbA protein. In Xanthomonas oryzae pv. oryzae (strain MAFF 311018), this protein is Disulfide bond formation protein B.